A 251-amino-acid chain; its full sequence is MAAHLLIVDALNLIRRIHAVQGTPCVETCQHALDQLIIHSQPTHAVAVFDDDARSSGWRHQRLPDYKAGRPPMPDDLHNEMPALRAAFEQRGVRCWASDGNEADDLAATLALKVTEAGHQATIVSTDKGYCQLLSPGLRIRDYFQKRWLDAPFIEKEFGVLPRQLPDYWGLAGISSSKVPGVAGIGPKSATQLLIQFQNLEGIYAHLDEVPEKWRKKLETHKEMAFLCRDIARLQTDLHIDGNLQQLRLAR.

D104 provides a ligand contact to Mg(2+). Positions 160-249 (VLPRQLPDYW…IDGNLQQLRL (90 aa)) constitute a 5'-3' exonuclease domain. Positions 171, 172, 180, 182, and 185 each coordinate K(+). The interval 184–189 (GIGPKS) is interaction with DNA.

Belongs to the Xni family. Mg(2+) is required as a cofactor. It depends on K(+) as a cofactor.

Has flap endonuclease activity. During DNA replication, flap endonucleases cleave the 5'-overhanging flap structure that is generated by displacement synthesis when DNA polymerase encounters the 5'-end of a downstream Okazaki fragment. The chain is Flap endonuclease Xni from Salmonella heidelberg (strain SL476).